A 724-amino-acid polypeptide reads, in one-letter code: Catalase-peroxidase (724 aa).

The segment at residues 98 to 226 (WHAAGTYRIA…LAAVMMGLIY (129 aa)) is a cross-link (tryptophyl-tyrosyl-methioninium (Trp-Tyr) (with M-252)). His-99 (proton acceptor) is an active-site residue. Residues 226–252 (YVNPEGVDGNPDPLKTAHDIRVTFERM) constitute a cross-link (tryptophyl-tyrosyl-methioninium (Tyr-Met) (with W-98)). A heme b-binding site is contributed by His-267.

It belongs to the peroxidase family. Peroxidase/catalase subfamily. In terms of assembly, homodimer or homotetramer. Heme b serves as cofactor. Post-translationally, formation of the three residue Trp-Tyr-Met cross-link is important for the catalase, but not the peroxidase activity of the enzyme.

It catalyses the reaction H2O2 + AH2 = A + 2 H2O. It carries out the reaction 2 H2O2 = O2 + 2 H2O. In terms of biological role, bifunctional enzyme with both catalase and broad-spectrum peroxidase activity. In Psychromonas ingrahamii (strain DSM 17664 / CCUG 51855 / 37), this protein is Catalase-peroxidase.